The sequence spans 159 residues: Phosphopantetheine adenylyltransferase (159 aa).

A substrate-binding site is contributed by threonine 10. ATP-binding positions include 10 to 11 (TF) and histidine 18. Substrate-binding residues include lysine 42, methionine 74, and arginine 88. ATP-binding positions include 89 to 91 (GLR), glutamate 99, and 124 to 130 (WSFISSS).

This sequence belongs to the bacterial CoaD family. In terms of assembly, homohexamer. Requires Mg(2+) as cofactor.

It localises to the cytoplasm. It carries out the reaction (R)-4'-phosphopantetheine + ATP + H(+) = 3'-dephospho-CoA + diphosphate. It participates in cofactor biosynthesis; coenzyme A biosynthesis; CoA from (R)-pantothenate: step 4/5. Its function is as follows. Reversibly transfers an adenylyl group from ATP to 4'-phosphopantetheine, yielding dephospho-CoA (dPCoA) and pyrophosphate. The chain is Phosphopantetheine adenylyltransferase from Salmonella arizonae (strain ATCC BAA-731 / CDC346-86 / RSK2980).